A 727-amino-acid polypeptide reads, in one-letter code: E3 SUMO-protein ligase pli1 (727 aa).

Positions 18–52 constitute an SAP domain; the sequence is ETGLIIPQLKDILRVFGLRLSGTKAELITRIKQLI. The region spanning 108 to 261 is the PINIT domain; sequence YSRPFAPVVH…SVVVCFVKVY (154 aa). Residues 290–371 form an SP-RING-type zinc finger; it reads QDADIIATST…MQHILESTPS (82 aa). 4 residues coordinate Zn(2+): cysteine 321, histidine 323, cysteine 344, and cysteine 347. Residues serine 395 and serine 396 each carry the phosphoserine modification. Disordered regions lie at residues 408–558 and 706–727; these read ELSD…TQHS and QSNN…QSID. Polar residues-rich tracts occupy residues 417-435 and 459-494; these read TMAN…THNS and VATS…NRST. Over residues 546-558 the composition is skewed to low complexity; that stretch reads SQQNNNNSNTQHS.

This sequence belongs to the PIAS family. As to quaternary structure, interacts with hus5/ubc9.

It localises to the nucleus. It functions in the pathway protein modification; protein sumoylation. In terms of biological role, acts as an E3 ligase mediating SUMO/Smt3 attachment to other proteins. Involved in the maintenance of the centromere and in telomere length. Regulates recombination, via extension sumoylation, particularly within the heterochromatin repeats. The chain is E3 SUMO-protein ligase pli1 (pli1) from Schizosaccharomyces pombe (strain 972 / ATCC 24843) (Fission yeast).